The sequence spans 382 residues: UBP1-associated proteins 1B (382 aa).

Residues 1 to 99 (MAKEGEERKK…SDESEEIVDS (99 aa)) form a disordered region. Residues 10-22 (KEKKEKKERKERK) show a composition bias toward basic residues. Residues 23–34 (RREAEELAVREK) are compositionally biased toward basic and acidic residues. The RRM domain occupies 163–248 (RNIFVRGLGW…RPFNSGKPRE (86 aa)).

It localises to the nucleus. Acts as a component of a complex regulating the turnover of mRNAs in the nucleus. Binds with high affinity to RNA molecules that contain U-rich sequences in 3'-UTRs. May function in complex with UBP1 and contribute to the stabilization of mRNAs in the nucleus. This chain is UBP1-associated proteins 1B (UBA1B), found in Arabidopsis thaliana (Mouse-ear cress).